The sequence spans 231 residues: Octanoyltransferase (231 aa).

The 179-residue stretch at 49 to 227 (PHLPEAVWLL…ALAARFHLAW (179 aa)) folds into the BPL/LPL catalytic domain. Substrate-binding positions include 91-98 (RGGEVTHH), 158-160 (AIG), and 171-173 (GLA). C189 functions as the Acyl-thioester intermediate in the catalytic mechanism.

It belongs to the LipB family.

The protein localises to the cytoplasm. The enzyme catalyses octanoyl-[ACP] + L-lysyl-[protein] = N(6)-octanoyl-L-lysyl-[protein] + holo-[ACP] + H(+). The protein operates within protein modification; protein lipoylation via endogenous pathway; protein N(6)-(lipoyl)lysine from octanoyl-[acyl-carrier-protein]: step 1/2. Its function is as follows. Catalyzes the transfer of endogenously produced octanoic acid from octanoyl-acyl-carrier-protein onto the lipoyl domains of lipoate-dependent enzymes. Lipoyl-ACP can also act as a substrate although octanoyl-ACP is likely to be the physiological substrate. The protein is Octanoyltransferase of Parasynechococcus marenigrum (strain WH8102).